The primary structure comprises 62 residues: Sperm protamine P1 (62 aa).

The disordered stretch occupies residues 1 to 62 (MARYRHSRSR…RYSRRRRRRY (62 aa)).

This sequence belongs to the protamine P1 family. Testis.

The protein localises to the nucleus. It is found in the chromosome. Protamines substitute for histones in the chromatin of sperm during the haploid phase of spermatogenesis. They compact sperm DNA into a highly condensed, stable and inactive complex. This Notamacropus eugenii (Tammar wallaby) protein is Sperm protamine P1 (PRM1).